The primary structure comprises 148 residues: Macrodomain Ter protein (148 aa).

Belongs to the MatP family. In terms of assembly, homodimer.

The protein localises to the cytoplasm. Required for spatial organization of the terminus region of the chromosome (Ter macrodomain) during the cell cycle. Prevents early segregation of duplicated Ter macrodomains during cell division. Binds specifically to matS, which is a 13 bp signature motif repeated within the Ter macrodomain. This Haemophilus ducreyi (strain 35000HP / ATCC 700724) protein is Macrodomain Ter protein.